The chain runs to 316 residues: DNA-directed RNA polymerase subunit alpha (316 aa).

The tract at residues 1 to 232 (MSGNDLFPST…DLFNPLHHCS (232 aa)) is alpha N-terminal domain (alpha-NTD). An alpha C-terminal domain (alpha-CTD) region spans residues 247-316 (KINDILVEEL…LNIYLPKEKY (70 aa)).

Belongs to the RNA polymerase alpha chain family. As to quaternary structure, in plastids the minimal PEP RNA polymerase catalytic core is composed of four subunits: alpha, beta, beta', and beta''. When a (nuclear-encoded) sigma factor is associated with the core the holoenzyme is formed, which can initiate transcription.

The protein resides in the plastid. The protein localises to the chloroplast. The catalysed reaction is RNA(n) + a ribonucleoside 5'-triphosphate = RNA(n+1) + diphosphate. Its function is as follows. DNA-dependent RNA polymerase catalyzes the transcription of DNA into RNA using the four ribonucleoside triphosphates as substrates. This is DNA-directed RNA polymerase subunit alpha from Mesostigma viride (Green alga).